The chain runs to 237 residues: (5-formylfuran-3-yl)methyl phosphate synthase (237 aa).

Lysine 29 (schiff-base intermediate with substrate) is an active-site residue. Catalysis depends on lysine 87, which acts as the Proton acceptor.

It belongs to the MfnB family.

The catalysed reaction is 2 D-glyceraldehyde 3-phosphate = 4-(hydroxymethyl)-2-furancarboxaldehyde phosphate + phosphate + 2 H2O. It functions in the pathway cofactor biosynthesis; methanofuran biosynthesis. Its function is as follows. Catalyzes the formation of 4-(hydroxymethyl)-2-furancarboxaldehyde phosphate (4-HFC-P) from two molecules of glyceraldehyde-3-P (GA-3-P). This chain is (5-formylfuran-3-yl)methyl phosphate synthase, found in Methanopyrus kandleri (strain AV19 / DSM 6324 / JCM 9639 / NBRC 100938).